Reading from the N-terminus, the 510-residue chain is NAD(P)H-quinone oxidoreductase subunit 2 A, chloroplastic (510 aa).

13 consecutive transmembrane segments (helical) span residues 24-44, 57-77, 99-119, 124-144, 149-169, 183-203, 227-247, 295-315, 323-343, 354-374, 395-415, 418-438, and 484-504; these read LLLFDGSLIFPECILIFGLIL, IPWLYFISSTSLVMSITALLF, IFQFLILLCSTLCIPLSVEYI, MAITEFLLFILTATLGGMFLC, LITIFVAPECFSLCSYLLSGY, YLLMGGASSSILVHGFSWLYG, PGISIALIFITVGIGFKLSPA, WHLLLEILAILSMILGNLIAI, MLAYSSIGQIGYVIIGIIVGD, YMLFYISMNLGTFACIVSFGL, ALSLALCLLSLGGLPPLAGFF, LHLFWCGWQAGLYFLVSIGLL, and MIVCVIASTIPGISMNPIIAI.

It belongs to the complex I subunit 2 family. NDH is composed of at least 16 different subunits, 5 of which are encoded in the nucleus.

The protein localises to the plastid. Its subcellular location is the chloroplast thylakoid membrane. The enzyme catalyses a plastoquinone + NADH + (n+1) H(+)(in) = a plastoquinol + NAD(+) + n H(+)(out). It catalyses the reaction a plastoquinone + NADPH + (n+1) H(+)(in) = a plastoquinol + NADP(+) + n H(+)(out). Its function is as follows. NDH shuttles electrons from NAD(P)H:plastoquinone, via FMN and iron-sulfur (Fe-S) centers, to quinones in the photosynthetic chain and possibly in a chloroplast respiratory chain. The immediate electron acceptor for the enzyme in this species is believed to be plastoquinone. Couples the redox reaction to proton translocation, and thus conserves the redox energy in a proton gradient. This chain is NAD(P)H-quinone oxidoreductase subunit 2 A, chloroplastic, found in Carica papaya (Papaya).